The chain runs to 157 residues: SsrA-binding protein (157 aa).

The protein belongs to the SmpB family.

It is found in the cytoplasm. Its function is as follows. Required for rescue of stalled ribosomes mediated by trans-translation. Binds to transfer-messenger RNA (tmRNA), required for stable association of tmRNA with ribosomes. tmRNA and SmpB together mimic tRNA shape, replacing the anticodon stem-loop with SmpB. tmRNA is encoded by the ssrA gene; the 2 termini fold to resemble tRNA(Ala) and it encodes a 'tag peptide', a short internal open reading frame. During trans-translation Ala-aminoacylated tmRNA acts like a tRNA, entering the A-site of stalled ribosomes, displacing the stalled mRNA. The ribosome then switches to translate the ORF on the tmRNA; the nascent peptide is terminated with the 'tag peptide' encoded by the tmRNA and targeted for degradation. The ribosome is freed to recommence translation, which seems to be the essential function of trans-translation. In Chlorobium phaeovibrioides (strain DSM 265 / 1930) (Prosthecochloris vibrioformis (strain DSM 265)), this protein is SsrA-binding protein.